Reading from the N-terminus, the 325-residue chain is Inner membrane protein YrbG (325 aa).

Residues 1 to 5 are Periplasmic-facing; that stretch reads MLLAT. Residues 6–26 form a helical membrane-spanning segment; the sequence is ALLIVGLLLVVYSADRLVFAA. Residues 27 to 37 lie on the Cytoplasmic side of the membrane; sequence SILCRTFGIPP. The helical transmembrane segment at 38–58 threads the bilayer; the sequence is LIIGMTVVSIGTSLPEVIVSL. The Periplasmic segment spans residues 59 to 67; it reads AASLHEQRD. A helical transmembrane segment spans residues 68–88; the sequence is LAVGTALGSNIINILLILGLA. Residues 89–104 are Cytoplasmic-facing; the sequence is ALVRPFTVHSDVLRRE. A helical membrane pass occupies residues 105–125; it reads LPLMLLVSVVAGSVLYDGQLS. Residue arginine 126 is a topological domain, periplasmic. Residues 127–147 traverse the membrane as a helical segment; sequence SDGIFLLFLAVLWLLFIVKLA. Residues 148–169 are Cytoplasmic-facing; that stretch reads RQAERQGTDSLTREQLAELPRD. Residues 170–190 form a helical membrane-spanning segment; the sequence is GGLPVAFLWLGIALIIMPVAT. Over 191-198 the chain is Periplasmic; sequence RMVVDNAT. The helical transmembrane segment at 199-219 threads the bilayer; that stretch reads VLANYFAISELTMGLTAIAIG. Topologically, residues 220–243 are cytoplasmic; it reads TSLPELATAIAGVRKGENDIAVGN. Residues 244–264 form a helical membrane-spanning segment; it reads IIGANIFNIVIVLGLPALITP. At 265–269 the chain is on the periplasmic side; the sequence is GEIDP. Residues 270-290 form a helical membrane-spanning segment; it reads LAYSRDYSVMLLVSIIFALLC. At 291 to 302 the chain is on the cytoplasmic side; it reads WRRSPQPGRGVG. Residues 303–323 form a helical membrane-spanning segment; sequence VLLTGGFIVWLAMLYWLSPIL. Over 324–325 the chain is Periplasmic; the sequence is VE.

The protein belongs to the Ca(2+):cation antiporter (CaCA) (TC 2.A.19) family.

It localises to the cell inner membrane. The sequence is that of Inner membrane protein YrbG (yrbG) from Escherichia coli (strain K12).